A 98-amino-acid chain; its full sequence is DNA-binding protein Fis (98 aa).

The segment at residues 74–93 is a DNA-binding region (H-T-H motif); sequence QTRAALMMGINRGTLRKKLK.

It belongs to the transcriptional regulatory Fis family. In terms of assembly, homodimer.

Functionally, activates ribosomal RNA transcription. Plays a direct role in upstream activation of rRNA promoters. The protein is DNA-binding protein Fis of Pectobacterium atrosepticum (strain SCRI 1043 / ATCC BAA-672) (Erwinia carotovora subsp. atroseptica).